Here is a 155-residue protein sequence, read N- to C-terminus: Putative pre-16S rRNA nuclease (155 aa).

Belongs to the YqgF nuclease family.

The protein resides in the cytoplasm. Functionally, could be a nuclease involved in processing of the 5'-end of pre-16S rRNA. The sequence is that of Putative pre-16S rRNA nuclease from Corynebacterium jeikeium (strain K411).